A 281-amino-acid polypeptide reads, in one-letter code: 2-dehydro-3-deoxyphosphooctonate aldolase (281 aa).

Belongs to the KdsA family.

The protein resides in the cytoplasm. It carries out the reaction D-arabinose 5-phosphate + phosphoenolpyruvate + H2O = 3-deoxy-alpha-D-manno-2-octulosonate-8-phosphate + phosphate. Its pathway is carbohydrate biosynthesis; 3-deoxy-D-manno-octulosonate biosynthesis; 3-deoxy-D-manno-octulosonate from D-ribulose 5-phosphate: step 2/3. It functions in the pathway bacterial outer membrane biogenesis; lipopolysaccharide biosynthesis. The sequence is that of 2-dehydro-3-deoxyphosphooctonate aldolase from Hahella chejuensis (strain KCTC 2396).